The sequence spans 199 residues: Pathogenesis-related 5 protein Cup a 3 (199 aa).

Disulfide bonds link Cys-9–Cys-198, Cys-50–Cys-60, Cys-65–Cys-71, Cys-113–Cys-187, Cys-118–Cys-171, Cys-126–Cys-136, Cys-140–Cys-149, and Cys-150–Cys-158.

Belongs to the thaumatin family. Expressed in pollen.

Its subcellular location is the secreted. The protein resides in the extracellular space. The protein localises to the extracellular matrix. It localises to the pollen coat. It is found in the cytoplasm. Its subcellular location is the nucleus. The protein resides in the mitochondrion. The protein localises to the endoplasmic reticulum. It localises to the golgi apparatus. It is found in the golgi stack. Its subcellular location is the vesicle. The protein resides in the vacuole. The polypeptide is Pathogenesis-related 5 protein Cup a 3 (Hesperocyparis arizonica (Arizona cypress)).